A 70-amino-acid polypeptide reads, in one-letter code: uncharacterized protein (70 aa).

This is an uncharacterized protein from Treponema pallidum (strain Nichols).